We begin with the raw amino-acid sequence, 471 residues long: Coagulation factor IX (471 aa).

The N-terminal stretch at 1–28 (MKHLNTVMAESPALITIFLLGYLLSTEC) is a signal peptide. The propeptide occupies 29–46 (AVFLDRENATKILTRPKR). 11 residues coordinate Ca(2+): Y47, N48, E53, E54, E61, E63, E66, E67, E72, E73, and E76. Positions 47 to 92 (YNSGKLEEFVRGNLERECIEERCSFEEAREVFENTEKTTEFWKQYV) constitute a Gla domain. 4-carboxyglutamate is present on residues E53, E54, E61, E63, E66, E67, E72, E73, E76, E79, and E82. Residue E61 participates in Mg(2+) binding. An intrachain disulfide couples C64 to C69. Mg(2+) is bound at residue E66. Residue E72 coordinates Mg(2+). E76 serves as a coordination point for Mg(2+). E82 serves as a coordination point for Ca(2+). E82 is a Mg(2+) binding site. T85 is a glycosylation site (O-linked (GalNAc...) threonine). Residues E86, D93, G94, and Q96 each coordinate Ca(2+). E86 bears the 4-carboxyglutamate mark. E86 provides a ligand contact to Mg(2+). The region spanning 93 to 129 (DGDQCESNPCLNGGICKDDISSYECWCQVGFEGRNCE) is the EGF-like 1; calcium-binding domain. 10 disulfides stabilise this stretch: C97-C108, C102-C117, C119-C128, C134-C145, C141-C155, C157-C170, C178-C345, C262-C278, C392-C406, and C417-C445. The O-linked (Glc...) serine glycan is linked to S99. Ca(2+) is bound by residues D110 and D111. At D110 the chain carries (3R)-3-hydroxyaspartate. S114 carries the post-translational modification Phosphoserine. The 42-residue stretch at 130–171 (LDATCNIKNGRCKQFCKNSPDNKVICSCTEGYQLAEDQKSCE) folds into the EGF-like 2 domain. Positions 193–236 (AETVFSNMDYENSTEAVFIQDDITDGAILNNVTESSESLNDFTR) are cleaved as a propeptide — activation peptide. Residue Y202 is modified to Sulfotyrosine. An N-linked (GlcNAc...) asparagine glycan is attached at N204. S205 carries the post-translational modification Phosphoserine. Residue T206 is modified to Phosphothreonine; alternate. O-linked (GalNAc...) threonine; alternate glycosylation occurs at T206. A glycan (N-linked (GlcNAc...) asparagine) is linked at N223. O-linked (GalNAc...) threonine glycans are attached at residues T225 and T235. The 233-residue stretch at 237-469 (VVGGENAKPG…YVNWIKEKTK (233 aa)) folds into the Peptidase S1 domain. H277 (charge relay system) is an active-site residue. Ca(2+)-binding residues include E291, N293, E298, and E301. D325 (charge relay system) is an active-site residue. The active-site Charge relay system is S421.

The protein belongs to the peptidase S1 family. As to quaternary structure, heterodimer of a light chain and a heavy chain; disulfide-linked. Interacts (inactive and activated) with F11 (activated) in calcium-dependent manner. Interacts with SERPINC1. Activated by factor XIa, which excises the activation peptide. The propeptide can also be removed by snake venom protease. Activated by coagulation factor VIIa-tissue factor (F7-F3) complex in calcium-dependent manner. Post-translationally, the iron and 2-oxoglutarate dependent 3-hydroxylation of aspartate and asparagine is (R) stereospecific within EGF domains. In terms of processing, predominantly O-glucosylated at Ser-99 by POGLUT1 in vitro. Detected in liver.

Its subcellular location is the secreted. The catalysed reaction is Selective cleavage of Arg-|-Ile bond in factor X to form factor Xa.. Functionally, factor IX is a vitamin K-dependent plasma protein that participates in the intrinsic pathway of blood coagulation by converting factor X to its active form in the presence of Ca(2+) ions, phospholipids, and factor VIIIa. The polypeptide is Coagulation factor IX (F9) (Mus musculus (Mouse)).